The primary structure comprises 396 residues: tRNA-specific 2-thiouridylase MnmA (396 aa).

ATP contacts are provided by residues 35–42 (GLSGGVDS) and L61. The active-site Nucleophile is C122. The cysteines at positions 122 and 221 are disulfide-linked. Residue G147 participates in ATP binding. The interval 171-173 (KDQ) is interaction with tRNA. C221 acts as the Cysteine persulfide intermediate in catalysis. The interval 326-327 (RY) is interaction with tRNA.

The protein belongs to the MnmA/TRMU family.

It is found in the cytoplasm. The catalysed reaction is S-sulfanyl-L-cysteinyl-[protein] + uridine(34) in tRNA + AH2 + ATP = 2-thiouridine(34) in tRNA + L-cysteinyl-[protein] + A + AMP + diphosphate + H(+). In terms of biological role, catalyzes the 2-thiolation of uridine at the wobble position (U34) of tRNA, leading to the formation of s(2)U34. The polypeptide is tRNA-specific 2-thiouridylase MnmA (Parasynechococcus marenigrum (strain WH8102)).